Here is a 217-residue protein sequence, read N- to C-terminus: Glycerol-3-phosphate acyltransferase (217 aa).

6 helical membrane passes run 3 to 23, 56 to 76, 78 to 98, 120 to 140, 142 to 162, and 163 to 183; these read IVIL…VWIG, VLLM…LFGL, GVNP…PIFA, FFIY…MVSL, SMIS…TVPA, and ILPT…TFIF.

The protein belongs to the PlsY family. Probably interacts with PlsX.

It is found in the cell membrane. The catalysed reaction is an acyl phosphate + sn-glycerol 3-phosphate = a 1-acyl-sn-glycero-3-phosphate + phosphate. The protein operates within lipid metabolism; phospholipid metabolism. Catalyzes the transfer of an acyl group from acyl-phosphate (acyl-PO(4)) to glycerol-3-phosphate (G3P) to form lysophosphatidic acid (LPA). This enzyme utilizes acyl-phosphate as fatty acyl donor, but not acyl-CoA or acyl-ACP. The polypeptide is Glycerol-3-phosphate acyltransferase (Enterococcus faecalis (strain ATCC 700802 / V583)).